We begin with the raw amino-acid sequence, 447 residues long: MDLRRIMETVNMIDNENLDLRTTTMGISLLDCIDSDSDRACQKIYDKITTKAENLVKVARELETEYGIPIANKRITVTPISLIAAASGDSDYVKYAVTLDKAAKAVGVDLIGGFSALVHKGYQNGDRVLIKSIPQALKETERVCSSVNVGSTRSGINMDAVKEMGQIVIENEKINPLNNGNLVIFCNAVEDNPFMAGGFHGVGESDVALNVGVSGPGVVKTALEKVKGESMDVVAETIKQTAFKVTRMGQLVGQEASKRLGVDFGIVDLSLAPTPAQGDSVANILEEIGLESVGTHGTTAALAMLNDAVKKGGIMACSHVGGLSGAFIPESEDAGMIAAAEKGILTVDKLEAMTAVCSVGLDMIAVPGDTPAETISAMIADEAAIGMINNKTTAVRVIPVPGKEVGDSIEFGGLFGYAPIMPVHKESSAAMINRGGRIPAPVHSFKN.

Belongs to the UPF0210 family. In terms of assembly, homodimer.

This is UPF0210 protein Ldb1026 from Lactobacillus delbrueckii subsp. bulgaricus (strain ATCC 11842 / DSM 20081 / BCRC 10696 / JCM 1002 / NBRC 13953 / NCIMB 11778 / NCTC 12712 / WDCM 00102 / Lb 14).